The following is a 278-amino-acid chain: Small ribosomal subunit protein uS2 (278 aa).

Disordered stretches follow at residues 216 to 235 (EAAAAAKEAEDDTGYTTQWD) and 250 to 278 (NFAAAPADGNWGATTGGDWAAAGGEEWTN). Low complexity predominate over residues 256–278 (ADGNWGATTGGDWAAAGGEEWTN).

It belongs to the universal ribosomal protein uS2 family. In terms of assembly, component of the small ribosomal subunit. Mature ribosomes consist of a small (40S) and a large (60S) subunit. The 40S subunit contains about 33 different proteins and 1 molecule of RNA (18S). The 60S subunit contains about 49 different proteins and 3 molecules of RNA (25S, 5.8S and 5S). Interacts with ribosomal protein S21.

The protein localises to the cytoplasm. Functionally, required for the assembly and/or stability of the 40S ribosomal subunit. Required for the processing of the 20S rRNA-precursor to mature 18S rRNA in a late step of the maturation of 40S ribosomal subunits. The chain is Small ribosomal subunit protein uS2 from Monosiga brevicollis (Choanoflagellate).